Consider the following 69-residue polypeptide: uncharacterized protein (69 aa).

This is an uncharacterized protein from Bacillus anthracis.